We begin with the raw amino-acid sequence, 463 residues long: ATP synthase subunit beta (463 aa).

Residue G152–T159 coordinates ATP.

Belongs to the ATPase alpha/beta chains family. As to quaternary structure, F-type ATPases have 2 components, CF(1) - the catalytic core - and CF(0) - the membrane proton channel. CF(1) has five subunits: alpha(3), beta(3), gamma(1), delta(1), epsilon(1). CF(0) has three main subunits: a(1), b(2) and c(9-12). The alpha and beta chains form an alternating ring which encloses part of the gamma chain. CF(1) is attached to CF(0) by a central stalk formed by the gamma and epsilon chains, while a peripheral stalk is formed by the delta and b chains.

The protein localises to the cell inner membrane. It catalyses the reaction ATP + H2O + 4 H(+)(in) = ADP + phosphate + 5 H(+)(out). Functionally, produces ATP from ADP in the presence of a proton gradient across the membrane. The catalytic sites are hosted primarily by the beta subunits. The chain is ATP synthase subunit beta from Shewanella sp. (strain ANA-3).